The primary structure comprises 339 residues: DNA-directed RNA polymerase subunit alpha (339 aa).

The tract at residues 1–233 (MVREKVRIST…DLFIPFLHAE (233 aa)) is alpha N-terminal domain (alpha-NTD). The tract at residues 267–339 (IALKSIFIDQ…FTINLPKNKF (73 aa)) is alpha C-terminal domain (alpha-CTD).

This sequence belongs to the RNA polymerase alpha chain family. As to quaternary structure, in plastids the minimal PEP RNA polymerase catalytic core is composed of four subunits: alpha, beta, beta', and beta''. When a (nuclear-encoded) sigma factor is associated with the core the holoenzyme is formed, which can initiate transcription.

It is found in the plastid. Its subcellular location is the chloroplast. The catalysed reaction is RNA(n) + a ribonucleoside 5'-triphosphate = RNA(n+1) + diphosphate. Functionally, DNA-dependent RNA polymerase catalyzes the transcription of DNA into RNA using the four ribonucleoside triphosphates as substrates. The protein is DNA-directed RNA polymerase subunit alpha of Populus trichocarpa (Western balsam poplar).